A 665-amino-acid polypeptide reads, in one-letter code: Probable potassium transport system protein Kup (665 aa).

Transmembrane regions (helical) follow at residues 15-35 (SFLIALGVVYGDIGTSPLYVM), 48-68 (ITPDFILGVLSLIFWTMTLLT), 100-120 (WLIIPAMVGGSALLADGMLTP), 147-167 (IIIIIVLVILSFLFFIQHFGT), 173-193 (IFGPVMFIWFAFLAILGIVNL), 219-239 (LGFFILGGVFLSTTGAEALYS), 251-271 (LTWPLVKICLLLNYFGQAAWI), 292-312 (MMPSWLLLFGVLISTLAAIIA), 348-368 (IYMPAINRILWIACIAIVLYF), 378-398 (YGLSITVTMLMTSILLFNYLL), 403-423 (PLPIALIILVFFGSLEFSFLI), and 431-451 (KGGFVSVLIALCILSIMYIWI).

The protein belongs to the HAK/KUP transporter (TC 2.A.72) family.

It localises to the cell membrane. It catalyses the reaction K(+)(in) + H(+)(in) = K(+)(out) + H(+)(out). Transport of potassium into the cell. Likely operates as a K(+):H(+) symporter. This chain is Probable potassium transport system protein Kup, found in Clostridium perfringens (strain ATCC 13124 / DSM 756 / JCM 1290 / NCIMB 6125 / NCTC 8237 / Type A).